We begin with the raw amino-acid sequence, 123 residues long: Putative membrane protein insertion efficiency factor (123 aa).

Belongs to the UPF0161 family.

The protein resides in the cell inner membrane. Could be involved in insertion of integral membrane proteins into the membrane. In Beijerinckia indica subsp. indica (strain ATCC 9039 / DSM 1715 / NCIMB 8712), this protein is Putative membrane protein insertion efficiency factor.